The primary structure comprises 1896 residues: RNA replication protein (1896 aa).

The Alphavirus-like MT domain maps to 60–227; that stretch reads IHDSPLSHSH…NQPLAAHQWM (168 aa). Disordered stretches follow at residues 828–866 and 891–987; these read GRED…VEDE and DDLN…SNDK. The span at 833–855 shows a compositional bias: pro residues; that stretch reads GPPPPPPPPSTTEPPPPPNPPAA. Residues 945–959 show a composition bias toward low complexity; the sequence is PSDATPTPAARAPSS. ATP contacts are provided by residues 996–1003 and 1059–1066; these read ARLVAGKT and GLPGTGKS. One can recognise a (+)RNA virus helicase ATP-binding domain in the interval 1025 to 1194; the sequence is IGTIPTAEAE…AIASYAHEYR (170 aa). The (+)RNA virus helicase C-terminal domain occupies 1195–1327; it reads RVSDRPAPGV…FRTDPHKLPL (133 aa). Residues 1347-1385 are disordered; sequence AVPRRNAASNPDALPSQRILPGGQSTTAEPXQSQASALP. Over residues 1369–1383 the composition is skewed to polar residues; that stretch reads GQSTTAEPXQSQASA. Residues 1668 to 1774 form the RdRp catalytic domain; the sequence is RESTDGDYTA…NSPITVRTGW (107 aa).

The enzyme catalyses ATP + H2O = ADP + phosphate + H(+). The catalysed reaction is RNA(n) + a ribonucleoside 5'-triphosphate = RNA(n+1) + diphosphate. In terms of biological role, RNA replication protein replicates the viral genomic RNA. The central part of this protein possibly functions as an ATP-binding helicase and/or methyltransferase. This is RNA replication protein from Botrytis virus F (isolate Botrytis cinerea/New Zealand/Howitt/2001) (BotV-F).